The chain runs to 166 residues: Biotin carboxyl carrier protein of acetyl-CoA carboxylase (166 aa).

A compositionally biased stretch (polar residues) spans 61–70 (STASEASSPA). The tract at residues 61–82 (STASEASSPASVKDVPVEEQPQ) is disordered. The 77-residue stretch at 90 to 166 (GDIVESPLVG…EFGQGLVRIK (77 aa)) folds into the Biotinyl-binding domain. An N6-biotinyllysine modification is found at Lys132.

As to quaternary structure, homodimer.

The protein operates within lipid metabolism; fatty acid biosynthesis. This protein is a component of the acetyl coenzyme A carboxylase complex; first, biotin carboxylase catalyzes the carboxylation of the carrier protein and then the transcarboxylase transfers the carboxyl group to form malonyl-CoA. The sequence is that of Biotin carboxyl carrier protein of acetyl-CoA carboxylase from Streptococcus pyogenes serotype M6 (strain ATCC BAA-946 / MGAS10394).